The chain runs to 122 residues: Large ribosomal subunit protein uL18 (122 aa).

The protein belongs to the universal ribosomal protein uL18 family. As to quaternary structure, part of the 50S ribosomal subunit; part of the 5S rRNA/L5/L18/L25 subcomplex. Contacts the 5S and 23S rRNAs.

In terms of biological role, this is one of the proteins that bind and probably mediate the attachment of the 5S RNA into the large ribosomal subunit, where it forms part of the central protuberance. In Hydrogenobaculum sp. (strain Y04AAS1), this protein is Large ribosomal subunit protein uL18.